We begin with the raw amino-acid sequence, 678 residues long: Protein hook (678 aa).

The tract at residues 1-155 (MSTQNGMYYS…NIMRALQELE (155 aa)) is interaction with microtubules. The Calponin-homology (CH) domain occupies 5 to 123 (NGMYYSLLEW…RLLQLVLGCA (119 aa)). Coiled-coil stretches lie at residues 135–435 (EIMC…LKCG) and 479–589 (QTAL…AKEV).

The protein belongs to the hook family. In terms of assembly, homodimer. Interacts with microtubules via its N-terminus.

It is found in the cytoplasm. It localises to the cytoskeleton. The protein resides in the endosome. The protein localises to the synapse. In terms of biological role, involved in endocytic trafficking by stabilizing organelles of the endocytic pathway. Probably acts as a cytoskeletal linker protein required to tether endosome vesicles to the cytoskeleton. Involved in modulation of endocytosis at stages required for down-regulation of membrane proteins that control synapse size. Not involved in synaptic vesicle recycling. Required in R7 cells for boss endocytosis into multivesicular bodies (MVBs). Has a role in regulating adult longevity. This chain is Protein hook, found in Drosophila virilis (Fruit fly).